A 472-amino-acid chain; its full sequence is Glutamate--tRNA ligase (472 aa).

The 'HIGH' region signature appears at 10–20; that stretch reads PSPTGYLHVGG. Zn(2+)-binding residues include C99, C101, C126, and D128. A 'KMSKS' region motif is present at residues 238–242; sequence KLSKR. K241 is an ATP binding site.

This sequence belongs to the class-I aminoacyl-tRNA synthetase family. Glutamate--tRNA ligase type 1 subfamily. Monomer. It depends on Zn(2+) as a cofactor.

Its subcellular location is the cytoplasm. The catalysed reaction is tRNA(Glu) + L-glutamate + ATP = L-glutamyl-tRNA(Glu) + AMP + diphosphate. Functionally, catalyzes the attachment of glutamate to tRNA(Glu) in a two-step reaction: glutamate is first activated by ATP to form Glu-AMP and then transferred to the acceptor end of tRNA(Glu). The polypeptide is Glutamate--tRNA ligase (Photorhabdus laumondii subsp. laumondii (strain DSM 15139 / CIP 105565 / TT01) (Photorhabdus luminescens subsp. laumondii)).